The following is a 113-amino-acid chain: N(2)-fixation sustaining protein CowN (113 aa).

It belongs to the CowN family.

Its function is as follows. Is required to sustain N(2)-dependent growth in the presence of low levels of carbon monoxide (CO). Probably acts by protecting the N(2) fixation ability of the nitrogenase complex, which is inactivated in the presence of CO. In Azoarcus sp. (strain BH72), this protein is N(2)-fixation sustaining protein CowN.